Reading from the N-terminus, the 259-residue chain is Hydroxyacylglutathione hydrolase (259 aa).

His56, His58, Asp60, His61, His112, Asp133, and His171 together coordinate Zn(2+).

The protein belongs to the metallo-beta-lactamase superfamily. Glyoxalase II family. Monomer. Zn(2+) is required as a cofactor.

It carries out the reaction an S-(2-hydroxyacyl)glutathione + H2O = a 2-hydroxy carboxylate + glutathione + H(+). It participates in secondary metabolite metabolism; methylglyoxal degradation; (R)-lactate from methylglyoxal: step 2/2. Its function is as follows. Thiolesterase that catalyzes the hydrolysis of S-D-lactoyl-glutathione to form glutathione and D-lactic acid. The chain is Hydroxyacylglutathione hydrolase from Pseudomonas putida (strain ATCC 47054 / DSM 6125 / CFBP 8728 / NCIMB 11950 / KT2440).